We begin with the raw amino-acid sequence, 448 residues long: MSSYSRAERAPWGDFPKVVRNGDLGSLTNEPEYQAAKQGDAEAALNLVERLISDDTVAQLKTLIGDDKPRIVPVLAVEAAGNNKIPAMMAVVLADRLGLEVETDIVQREKVARTGAGSDHRLAFNPTFEGEVIPGQKYIVVDDTLTMGGTIASLRGYIENNGGKVMAASVMTAHEGALDLAVKPKMLAGINEKHGPAMDAFWKETFGYGIDRLTQGEAGHLRAAPSVDAIRDRIAAARNEAVNRVGASRTATTARAGQQQSPAVKQSSGNSGEDLLQAAQEAETEQQALLESAPIEQTYQQTLALYVQAKHDQVERIEDRLEQLVDRQQARLQQLQSNAPGLLSLPRTKAAWQQQQAQQQARLQTLHTRLDMVREIKEGMGIHAPKIEELATRKMRADDPELAGDWDSMREAARRHQALMRKQEQEKKQAQERERGRSQSLGLSNKPS.

Disordered regions lie at residues 243–273 (NRVG…NSGE) and 411–448 (EAAR…NKPS). Residues 246–261 (GASRTATTARAGQQQS) are compositionally biased toward low complexity. The span at 262 to 271 (PAVKQSSGNS) shows a compositional bias: polar residues. A compositionally biased stretch (basic and acidic residues) spans 421-437 (RKQEQEKKQAQERERGR). Positions 438-448 (SQSLGLSNKPS) are enriched in polar residues.

It to H.influenzae HI_1407.

This chain is Protein TraN (traN), found in Escherichia coli.